We begin with the raw amino-acid sequence, 554 residues long: Hydroxylamine reductase (554 aa).

[2Fe-2S] cluster is bound by residues Cys3, Cys6, Cys18, and Cys25. 8 residues coordinate hybrid [4Fe-2O-2S] cluster: His252, Glu276, Cys320, Cys408, Cys436, Cys461, Glu495, and Lys497. Cys408 carries the cysteine persulfide modification.

It belongs to the HCP family. It depends on [2Fe-2S] cluster as a cofactor. Hybrid [4Fe-2O-2S] cluster serves as cofactor.

The protein resides in the cytoplasm. The catalysed reaction is A + NH4(+) + H2O = hydroxylamine + AH2 + H(+). In terms of biological role, catalyzes the reduction of hydroxylamine to form NH(3) and H(2)O. The sequence is that of Hydroxylamine reductase from Shewanella baltica (strain OS195).